The sequence spans 988 residues: Isoleucine--tRNA ligase (988 aa).

Positions proline 60–histidine 70 match the 'HIGH' region motif. Glutamate 570 lines the L-isoleucyl-5'-AMP pocket. The short motif at lysine 611–serine 615 is the 'KMSKS' region element. Lysine 614 lines the ATP pocket. Residues cysteine 957, cysteine 960, cysteine 977, and cysteine 980 each contribute to the Zn(2+) site.

Belongs to the class-I aminoacyl-tRNA synthetase family. IleS type 1 subfamily. As to quaternary structure, monomer. It depends on Zn(2+) as a cofactor.

It localises to the cytoplasm. It catalyses the reaction tRNA(Ile) + L-isoleucine + ATP = L-isoleucyl-tRNA(Ile) + AMP + diphosphate. Functionally, catalyzes the attachment of isoleucine to tRNA(Ile). As IleRS can inadvertently accommodate and process structurally similar amino acids such as valine, to avoid such errors it has two additional distinct tRNA(Ile)-dependent editing activities. One activity is designated as 'pretransfer' editing and involves the hydrolysis of activated Val-AMP. The other activity is designated 'posttransfer' editing and involves deacylation of mischarged Val-tRNA(Ile). The protein is Isoleucine--tRNA ligase of Synechocystis sp. (strain ATCC 27184 / PCC 6803 / Kazusa).